The sequence spans 377 residues: 23S rRNA (uracil(747)-C(5))-methyltransferase RlmC (377 aa).

[4Fe-4S] cluster-binding residues include Cys-3, Cys-11, Cys-14, and Cys-87. Gln-212, Phe-241, Glu-262, and Asn-307 together coordinate S-adenosyl-L-methionine. The active-site Nucleophile is the Cys-334.

It belongs to the class I-like SAM-binding methyltransferase superfamily. RNA M5U methyltransferase family. RlmC subfamily.

The enzyme catalyses uridine(747) in 23S rRNA + S-adenosyl-L-methionine = 5-methyluridine(747) in 23S rRNA + S-adenosyl-L-homocysteine + H(+). Its function is as follows. Catalyzes the formation of 5-methyl-uridine at position 747 (m5U747) in 23S rRNA. The polypeptide is 23S rRNA (uracil(747)-C(5))-methyltransferase RlmC (Proteus mirabilis (strain HI4320)).